Reading from the N-terminus, the 391-residue chain is MAKAKFERNKPHVNIGTIGHVDHGKTTLTAAITKYFGEFRAYDQIDGAPEERARGITISTAHVEYESDTRHYAHVDCPGHADYVKNMITGAAQMDGAILVVNAADGPMPQTREHILLGRQVGIPYMVVYMNKVDQVDDPELIELVEMEIRELLSSYDYPGDDIPIIKGSALAAMNGTDKEIGEDSIRALIAAVDEYIPTPARAVDQPFLMPVEDVFSISGRGTVATGRIERGVVKVGEELEIVGIRPSKKTVCTGVEMFRKLLDQGEAGDNVGLLLRGVDRDGIERGQVLCKPGSVKPHTKFEAEAYILTKEEGGRHTPFFANYRPQFYFRTTDVTGTVQLPEGTEMVMPGDNLKFNVELIAPIAMEEKLRFAIREGGRTVGAGVVSKIIA.

The 192-residue stretch at 10 to 201 (KPHVNIGTIG…AVDEYIPTPA (192 aa)) folds into the tr-type G domain. Residues 19-26 (GHVDHGKT) are G1. Position 19-26 (19-26 (GHVDHGKT)) interacts with GTP. Residue Thr26 coordinates Mg(2+). A G2 region spans residues 55-59 (GITIS). Positions 76-79 (DCPG) are G3. Residues 76–80 (DCPGH) and 131–134 (NKVD) each bind GTP. A G4 region spans residues 131–134 (NKVD). The segment at 169–171 (SAL) is G5.

Belongs to the TRAFAC class translation factor GTPase superfamily. Classic translation factor GTPase family. EF-Tu/EF-1A subfamily. Monomer.

It is found in the cytoplasm. The enzyme catalyses GTP + H2O = GDP + phosphate + H(+). In terms of biological role, GTP hydrolase that promotes the GTP-dependent binding of aminoacyl-tRNA to the A-site of ribosomes during protein biosynthesis. The protein is Elongation factor Tu of Cereibacter sphaeroides (strain ATCC 17029 / ATH 2.4.9) (Rhodobacter sphaeroides).